The chain runs to 583 residues: uncharacterized protein (583 aa).

One can recognise an FAD-binding FR-type domain in the interval Tyr162 to Lys424.

This sequence belongs to the flavoprotein pyridine nucleotide cytochrome reductase family. FAD serves as cofactor.

It localises to the mitochondrion. This is an uncharacterized protein from Schizosaccharomyces pombe (strain 972 / ATCC 24843) (Fission yeast).